The primary structure comprises 525 residues: Probable protein kinase UbiB (525 aa).

A Protein kinase domain is found at 118–500; it reads DFERVPVASA…QKRTNRLLQG (383 aa). ATP is bound by residues 124-132 and lysine 150; that span reads VASASIAQV. Catalysis depends on aspartate 285, which acts as the Proton acceptor. Residues 501-521 traverse the membrane as a helical segment; that stretch reads LLLFGVAVGVGAALARVFLAL.

This sequence belongs to the ABC1 family. UbiB subfamily.

It localises to the cell inner membrane. It participates in cofactor biosynthesis; ubiquinone biosynthesis [regulation]. Its function is as follows. Is probably a protein kinase regulator of UbiI activity which is involved in aerobic coenzyme Q (ubiquinone) biosynthesis. The chain is Probable protein kinase UbiB from Paraburkholderia xenovorans (strain LB400).